We begin with the raw amino-acid sequence, 189 residues long: Probable nicotinate-nucleotide adenylyltransferase (189 aa).

It belongs to the NadD family.

The enzyme catalyses nicotinate beta-D-ribonucleotide + ATP + H(+) = deamido-NAD(+) + diphosphate. It functions in the pathway cofactor biosynthesis; NAD(+) biosynthesis; deamido-NAD(+) from nicotinate D-ribonucleotide: step 1/1. Functionally, catalyzes the reversible adenylation of nicotinate mononucleotide (NaMN) to nicotinic acid adenine dinucleotide (NaAD). In Bacillus cereus (strain Q1), this protein is Probable nicotinate-nucleotide adenylyltransferase.